The sequence spans 1523 residues: ATP-binding cassette sub-family C member 3 (1523 aa).

Topologically, residues 1-35 (MDRLCGSGELGSKFWDSNLSIYTNTPDLTPCFQNS) are extracellular. An N-linked (GlcNAc...) asparagine glycan is attached at N18. A helical transmembrane segment spans residues 36–56 (LLAWVPCIYLWAALPCYLFYL). The Cytoplasmic portion of the chain corresponds to 57–75 (RHHQLGYIVLSWLSRLKTA). The chain crosses the membrane as a helical span at residues 76-96 (LGVLLWCVSWVDLFYSFHGLI). Residues 97–102 (HGSSPA) lie on the Extracellular side of the membrane. The helical transmembrane segment at 103-123 (PVFFVTPLVVGITMLLATLLI) threads the bilayer. The Cytoplasmic segment spans residues 124 to 129 (QYERLR). Residues 130–150 (GVQSSGVLIIFWLLCVICAII) traverse the membrane as a helical segment. Residues 151-170 (PFRSKILSALAEGKILDPFR) are Extracellular-facing. The helical transmembrane segment at 171-191 (FTTFYIYFALVFCALILSCFK) threads the bilayer. Residues 192–301 (EKPPLFSPEN…KSKQPSFLRA (110 aa)) lie on the Cytoplasmic side of the membrane. A helical transmembrane segment spans residues 302–324 (LVRTFTSSLLMSACFNLIQNLLG). One can recognise an ABC transmembrane type-1 1 domain in the interval 310-593 (LLMSACFNLI…LPQLISGLTQ (284 aa)). Over 325 to 345 (FVNPQLLSILIRFISDPTAPT) the chain is Extracellular. Residues 346–366 (WWGFLLAGLMFLSSTMQTLIL) traverse the membrane as a helical segment. Over 367-419 (HQYYHCIFVMALRLRTAIIGVIYRKALVITNSVKRESTVGEMVNLMSVDAQRF) the chain is Cytoplasmic. A helical transmembrane segment spans residues 420 to 440 (MDVSPFINLLWSAPLQVILAI). Position 441 (Y441) is a topological domain, extracellular. A helical transmembrane segment spans residues 442–462 (FLWQILGPSALAGVAVIVLLI). At 463-535 (PLNGAVSMKM…KGAYLQAIST (73 aa)) the chain is on the cytoplasmic side. A helical membrane pass occupies residues 536–556 (FIWICTPFLVTLITLGVYVYV). At 557–567 (DESNVLDAEKA) the chain is on the extracellular side. A helical transmembrane segment spans residues 568 to 588 (FVSLSLFNILKIPLNMLPQLI). At 589–967 (SGLTQASVSL…YAKSMGLCTT (379 aa)) the chain is on the cytoplasmic side. The ABC transporter 1 domain occupies 626–850 (ITIHNGTFTW…DGSFANFLRN (225 aa)). 660–667 (GPVGCGKS) contributes to the ATP binding site. Phosphoserine occurs at positions 903 and 906. Over residues 903–915 (SSLSSEGEVQNRT) the composition is skewed to polar residues. The interval 903–923 (SSLSSEGEVQNRTMPKKHTNS) is disordered. In terms of domain architecture, ABC transmembrane type-1 2 spans 967-1248 (TLSICLLYGG…MIRMISDLES (282 aa)). The helical transmembrane segment at 968–988 (LSICLLYGGQSAAAIGANVWL) threads the bilayer. At 989–1013 (SAWSNDAEEHGQQNKTSVRLGVYAA) the chain is on the extracellular side. Residue N1002 is glycosylated (N-linked (GlcNAc...) asparagine). Residues 1014 to 1034 (LGILQGLLVMLSAFTMVVGAI) form a helical membrane-spanning segment. Topologically, residues 1035–1071 (QAARLLHEALLHNKIRSPQSFFDTTPSGRILNRFSKD) are cytoplasmic. Residues 1072–1092 (IYVIDEVLAPTILMLLNSFFT) traverse the membrane as a helical segment. Topologically, residues 1093-1096 (SIST) are extracellular. A helical transmembrane segment spans residues 1097-1117 (IMVIVASTPLFMVVVLPLAVL). The Cytoplasmic portion of the chain corresponds to 1118–1191 (YGFVQRFYVA…YPYIASNRWL (74 aa)). The chain crosses the membrane as a helical span at residues 1192 to 1212 (GVHVEFVGNCVVLFAALFAVI). Topologically, residues 1213-1219 (GRNSLNP) are extracellular. The helical transmembrane segment at 1220–1240 (GLVGLSVSYALQVTMALNWMI) threads the bilayer. The Cytoplasmic portion of the chain corresponds to 1241–1523 (RMISDLESNI…YGMAKDAGLA (283 aa)). The ABC transporter 2 domain maps to 1287–1519 (FRNYSVRYRP…GGIFYGMAKD (233 aa)). 1319–1326 (GRTGAGKS) provides a ligand contact to ATP.

The protein belongs to the ABC transporter superfamily. ABCC family. Conjugate transporter (TC 3.A.1.208) subfamily. In terms of tissue distribution, detected throughout the gastrointestinal tract, liver, lung, pancreas, bladder, gall bladder and at low levels in the adrenal gland.

It localises to the basolateral cell membrane. The protein resides in the basal cell membrane. The catalysed reaction is an S-substituted glutathione(in) + ATP + H2O = an S-substituted glutathione(out) + ADP + phosphate + H(+). It carries out the reaction ATP + H2O + xenobioticSide 1 = ADP + phosphate + xenobioticSide 2.. It catalyses the reaction 17beta-estradiol 17-O-(beta-D-glucuronate)(in) + ATP + H2O = 17beta-estradiol 17-O-(beta-D-glucuronate)(out) + ADP + phosphate + H(+). The enzyme catalyses dehydroepiandrosterone 3-sulfate(in) + ATP + H2O = dehydroepiandrosterone 3-sulfate(out) + ADP + phosphate + H(+). The catalysed reaction is leukotriene C4(in) + ATP + H2O = leukotriene C4(out) + ADP + phosphate + H(+). It carries out the reaction taurocholate(in) + ATP + H2O = taurocholate(out) + ADP + phosphate + H(+). It catalyses the reaction glycocholate(in) + ATP + H2O = glycocholate(out) + ADP + phosphate + H(+). The enzyme catalyses taurolithocholate 3-sulfate(in) + ATP + H2O = taurolithocholate 3-sulfate(out) + ADP + phosphate + H(+). The catalysed reaction is taurochenodeoxycholate 3-sulfate(in) + ATP + H2O = taurochenodeoxycholate 3-sulfate(out) + ADP + phosphate + H(+). It carries out the reaction (4Z,15Z)-bilirubin IXalpha C8-beta-D-glucuronoside(in) + ATP + H2O = (4Z,15Z)-bilirubin IXalpha C8-beta-D-glucuronoside(out) + ADP + phosphate + H(+). It catalyses the reaction (4Z,15Z)-bilirubin IXalpha C8,C12-beta-D-bisglucuronoside(in) + ATP + H2O = (4Z,15Z)-bilirubin IXalpha C8,C12-beta-D-bisglucuronoside(out) + ADP + phosphate + H(+). ATP-dependent transporter of the ATP-binding cassette (ABC) family that binds and hydrolyzes ATP to enable active transport of various substrates including many drugs, toxicants and endogenous compound across cell membranes. Transports glucuronide conjugates such as bilirubin diglucuronide, estradiol-17-beta-o-glucuronide and GSH conjugates such as leukotriene C4 (LTC4). Transports also various bile salts (taurocholate, glycocholate, taurochenodeoxycholate-3-sulfate, taurolithocholate- 3-sulfate). Does not contribute substantially to bile salt physiology but provides an alternative route for the export of bile acids and glucuronides from cholestatic hepatocytes. May contribute to regulate the transport of organic compounds in testes across the blood-testis-barrier. The polypeptide is ATP-binding cassette sub-family C member 3 (Abcc3) (Mus musculus (Mouse)).